An 818-amino-acid polypeptide reads, in one-letter code: Phosphoenolpyruvate synthase (818 aa).

Residue His-442 is the Tele-phosphohistidine intermediate of the active site. Substrate contacts are provided by Arg-532, Arg-601, Glu-703, Gly-724, Ser-725, Asn-726, and Asp-727. Glu-703 lines the Mg(2+) pocket. Asp-727 provides a ligand contact to Mg(2+). Cys-774 acts as the Proton donor in catalysis.

It belongs to the PEP-utilizing enzyme family. Requires Mg(2+) as cofactor.

The catalysed reaction is pyruvate + ATP + H2O = phosphoenolpyruvate + AMP + phosphate + 2 H(+). Its pathway is carbohydrate biosynthesis; gluconeogenesis. Functionally, catalyzes the phosphorylation of pyruvate to phosphoenolpyruvate. This is Phosphoenolpyruvate synthase (ppsA) from Synechocystis sp. (strain ATCC 27184 / PCC 6803 / Kazusa).